The following is a 715-amino-acid chain: NADH-ubiquinone oxidoreductase chain 5 (715 aa).

Transmembrane regions (helical) follow at residues 1-21, 30-50, 81-101, 119-139, 140-160, 177-197, 200-220, 241-261, 274-294, 310-330, 331-351, 366-386, 403-423, 487-507, 543-563, 647-667, and 668-688; these read MYLS…FFGR, LITC…FFEV, LTVA…IYSI, LFTF…MFVG, WEGV…RIAA, FLTI…YATV, LAPY…LIGA, TPVS…YLLM, LLLC…IGLF, LGMM…FHLI, NHAF…HAVA, LPLT…FPYM, FSFS…FTTL, GFFL…FGFI, TLFK…ALVL, IVTN…FTFI, and SLLE…LSLT.

Belongs to the complex I subunit 5 family.

It localises to the mitochondrion inner membrane. It carries out the reaction a ubiquinone + NADH + 5 H(+)(in) = a ubiquinol + NAD(+) + 4 H(+)(out). Its function is as follows. Core subunit of the mitochondrial membrane respiratory chain NADH dehydrogenase (Complex I) that is believed to belong to the minimal assembly required for catalysis. Complex I functions in the transfer of electrons from NADH to the respiratory chain. The immediate electron acceptor for the enzyme is believed to be ubiquinone. The polypeptide is NADH-ubiquinone oxidoreductase chain 5 (ndh-5) (Neurospora crassa (strain ATCC 24698 / 74-OR23-1A / CBS 708.71 / DSM 1257 / FGSC 987)).